Reading from the N-terminus, the 500-residue chain is Centrosomal protein of 57 kDa (500 aa).

The span at 1-17 (MAAASVSAASGSHLSNS) shows a compositional bias: low complexity. Disordered regions lie at residues 1–34 (MAAA…HSSS) and 43–62 (KPFL…LAYP). The segment covering 18-34 (FAEPSRSNGSMVRHSSS) has biased composition (polar residues). Residues serine 53 and serine 55 each carry the phosphoserine modification. Residues 58–239 (TLAYPESNSR…KAAELQTGLE (182 aa)) form a centrosome localization domain (CLD) region. 2 coiled-coil regions span residues 63–242 (ESNS…ETNR) and 392–492 (ELKD…NSLQ). The interval 277–491 (GAQPHYRLCL…KDMQSIQNSL (215 aa)) is mediates interaction with microtubules. Residues 434–450 (KKELKATKKTLDEERNS) are compositionally biased toward basic and acidic residues. Positions 434 to 472 (KKELKATKKTLDEERNSSSRSGITGTTNKKDFMKLRPGE) are disordered. The span at 451–460 (SSRSGITGTT) shows a compositional bias: polar residues. Basic and acidic residues predominate over residues 461 to 471 (NKKDFMKLRPG).

Belongs to the translokin family. As to quaternary structure, homodimer and homooligomer. Interacts with microtubules. Interacts with FGF2 and RAP80. Does not interact with FGF1 or FGF2 isoform 24 kDa. Ubiquitous.

Its subcellular location is the nucleus. It is found in the cytoplasm. It localises to the cytoskeleton. The protein resides in the microtubule organizing center. The protein localises to the centrosome. In terms of biological role, centrosomal protein which may be required for microtubule attachment to centrosomes. May act by forming ring-like structures around microtubules. Mediates nuclear translocation and mitogenic activity of the internalized growth factor FGF2, but that of FGF1. This is Centrosomal protein of 57 kDa (CEP57) from Homo sapiens (Human).